Here is a 191-residue protein sequence, read N- to C-terminus: Flagellar transcriptional regulator FlhC (191 aa).

Residues cysteine 137, cysteine 140, cysteine 157, and cysteine 160 each contribute to the Zn(2+) site.

The protein belongs to the FlhC family. In terms of assembly, heterohexamer composed of two FlhC and four FlhD subunits. Each FlhC binds a FlhD dimer, forming a heterotrimer, and a hexamer assembles by dimerization of two heterotrimers. Zn(2+) is required as a cofactor.

It is found in the cytoplasm. In terms of biological role, functions in complex with FlhD as a master transcriptional regulator that regulates transcription of several flagellar and non-flagellar operons by binding to their promoter region. Activates expression of class 2 flagellar genes, including fliA, which is a flagellum-specific sigma factor that turns on the class 3 genes. Also regulates genes whose products function in a variety of physiological pathways. In Nitrosomonas eutropha (strain DSM 101675 / C91 / Nm57), this protein is Flagellar transcriptional regulator FlhC.